The following is a 644-amino-acid chain: Prolyl 3,4-dihydroxylase TPA1 (644 aa).

The 107-residue stretch at 141–247 folds into the Fe2OG dioxygenase domain; the sequence is SKTDMSINTY…RLSIQGWYHI (107 aa). Fe cation-binding residues include H159 and D161. Position 173 (Y173) interacts with 2-oxoglutarate. H227 is a Fe cation binding site. R238 is a binding site for 2-oxoglutarate. S607 is subject to Phosphoserine.

It belongs to the TPA1 family. As to quaternary structure, monomer and homodimer. Interacts with FRK1, eRF1 (SUP1), eRF3 (SUP35) and polyadenylate-binding protein PAB1. Interacts with ETT1. The cofactor is Fe(2+). It depends on L-ascorbate as a cofactor.

It localises to the nucleus. The catalysed reaction is [ribosomal protein uS12]-L-proline + 2-oxoglutarate + O2 = [ribosomal protein uS12]-(3S)-3-hydroxy-L-proline + succinate + CO2. It carries out the reaction [ribosomal protein uS12]-(3S)-3-hydroxy-L-proline + 2-oxoglutarate + O2 = [ribosomal protein uS12]-(3S)-3,4-dihydroxy-L-proline + succinate + CO2. Its function is as follows. Prolyl 3,4-dihydroxylase that catalyzes 3,4-dihydroxylation of 'Pro-64' of small ribosomal subunit uS12 (RPS23A and RPS23B), thereby regulating protein translation termination efficiency. Part of a messenger ribonucleoprotein (mRNP) complex at the 3'-UTR of mRNAs. It associates specifically with components of the translation termination complex and is involved in both translation termination and in regulation of normal mRNA decay through translation termination-coupled poly(A) shortening. This is Prolyl 3,4-dihydroxylase TPA1 from Saccharomyces cerevisiae (strain ATCC 204508 / S288c) (Baker's yeast).